The following is a 636-amino-acid chain: Chaperone protein HtpG (636 aa).

Residues 1–329 are a; substrate-binding; that stretch reads MSKEHGAAAE…TEDLPLNISR (329 aa). A b region spans residues 330-550; it reads ETLQENALIA…DGGMTASMEK (221 aa). Positions 551-636 are c; the sequence is LMRVMNKDES…TGWYAEVRKL (86 aa).

This sequence belongs to the heat shock protein 90 family. In terms of assembly, homodimer.

It is found in the cytoplasm. In terms of biological role, molecular chaperone. Has ATPase activity. The protein is Chaperone protein HtpG of Oleidesulfovibrio alaskensis (strain ATCC BAA-1058 / DSM 17464 / G20) (Desulfovibrio alaskensis).